The chain runs to 284 residues: Bifunctional protein FolD (284 aa).

166–168 (GAS) is a binding site for NADP(+).

It belongs to the tetrahydrofolate dehydrogenase/cyclohydrolase family. As to quaternary structure, homodimer.

The catalysed reaction is (6R)-5,10-methylene-5,6,7,8-tetrahydrofolate + NADP(+) = (6R)-5,10-methenyltetrahydrofolate + NADPH. It catalyses the reaction (6R)-5,10-methenyltetrahydrofolate + H2O = (6R)-10-formyltetrahydrofolate + H(+). It participates in one-carbon metabolism; tetrahydrofolate interconversion. Its function is as follows. Catalyzes the oxidation of 5,10-methylenetetrahydrofolate to 5,10-methenyltetrahydrofolate and then the hydrolysis of 5,10-methenyltetrahydrofolate to 10-formyltetrahydrofolate. In Legionella pneumophila subsp. pneumophila (strain Philadelphia 1 / ATCC 33152 / DSM 7513), this protein is Bifunctional protein FolD.